The following is a 100-amino-acid chain: uncharacterized protein (100 aa).

Residues 68 to 88 (VFLFFFTGSSPSFPAALLGLF) traverse the membrane as a helical segment.

The protein resides in the membrane. This is an uncharacterized protein from Saccharomyces cerevisiae (strain ATCC 204508 / S288c) (Baker's yeast).